Reading from the N-terminus, the 314-residue chain is Acetyl-coenzyme A carboxylase carboxyl transferase subunit beta (314 aa).

A CoA carboxyltransferase N-terminal domain is found at 44-311; the sequence is LMNKCPHCGT…VETWQASSPL (268 aa). Zn(2+)-binding residues include Cys48, Cys51, Cys67, and Cys70. The C4-type zinc finger occupies 48–70; that stretch reads CPHCGTIHYSKDLEKNLRVCKGC.

The protein belongs to the AccD/PCCB family. As to quaternary structure, acetyl-CoA carboxylase is a heterohexamer composed of biotin carboxyl carrier protein (AccB), biotin carboxylase (AccC) and two subunits each of ACCase subunit alpha (AccA) and ACCase subunit beta (AccD). It depends on Zn(2+) as a cofactor.

Its subcellular location is the cytoplasm. It catalyses the reaction N(6)-carboxybiotinyl-L-lysyl-[protein] + acetyl-CoA = N(6)-biotinyl-L-lysyl-[protein] + malonyl-CoA. It participates in lipid metabolism; malonyl-CoA biosynthesis; malonyl-CoA from acetyl-CoA: step 1/1. Component of the acetyl coenzyme A carboxylase (ACC) complex. Biotin carboxylase (BC) catalyzes the carboxylation of biotin on its carrier protein (BCCP) and then the CO(2) group is transferred by the transcarboxylase to acetyl-CoA to form malonyl-CoA. The protein is Acetyl-coenzyme A carboxylase carboxyl transferase subunit beta of Brevibacillus brevis (strain 47 / JCM 6285 / NBRC 100599).